A 492-amino-acid polypeptide reads, in one-letter code: N-succinylglutamate 5-semialdehyde dehydrogenase (492 aa).

220-225 contributes to the NAD(+) binding site; sequence GSANTG. Active-site residues include glutamate 243 and cysteine 277.

This sequence belongs to the aldehyde dehydrogenase family. AstD subfamily.

It carries out the reaction N-succinyl-L-glutamate 5-semialdehyde + NAD(+) + H2O = N-succinyl-L-glutamate + NADH + 2 H(+). It participates in amino-acid degradation; L-arginine degradation via AST pathway; L-glutamate and succinate from L-arginine: step 4/5. Functionally, catalyzes the NAD-dependent reduction of succinylglutamate semialdehyde into succinylglutamate. This chain is N-succinylglutamate 5-semialdehyde dehydrogenase, found in Escherichia coli O81 (strain ED1a).